The primary structure comprises 388 residues: Mitochondrial distribution and morphology protein 12 (388 aa).

Residues methionine 1 to leucine 388 form the SMP-LTD domain. Disordered stretches follow at residues aspartate 75 to alanine 101 and proline 209 to serine 251. Positions glutamate 83–alanine 101 are enriched in basic and acidic residues. Residues proline 234–leucine 243 are compositionally biased toward pro residues.

It belongs to the MDM12 family. Component of the ER-mitochondria encounter structure (ERMES) or MDM complex, composed of MMM1, MDM10, MDM12 and MDM34. An MMM1 homodimer associates with one molecule of MDM12 on each side in a pairwise head-to-tail manner, and the SMP-LTD domains of MMM1 and MDM12 generate a continuous hydrophobic tunnel for phospholipid trafficking.

The protein resides in the mitochondrion outer membrane. The protein localises to the endoplasmic reticulum membrane. Component of the ERMES/MDM complex, which serves as a molecular tether to connect the endoplasmic reticulum (ER) and mitochondria. Components of this complex are involved in the control of mitochondrial shape and protein biogenesis, and function in nonvesicular lipid trafficking between the ER and mitochondria. MDM12 is required for the interaction of the ER-resident membrane protein MMM1 and the outer mitochondrial membrane-resident beta-barrel protein MDM10. The MDM12-MMM1 subcomplex functions in the major beta-barrel assembly pathway that is responsible for biogenesis of all mitochondrial outer membrane beta-barrel proteins, and acts in a late step after the SAM complex. The MDM10-MDM12-MMM1 subcomplex further acts in the TOM40-specific pathway after the action of the MDM12-MMM1 complex. Essential for establishing and maintaining the structure of mitochondria and maintenance of mtDNA nucleoids. The protein is Mitochondrial distribution and morphology protein 12 of Cryptococcus neoformans var. neoformans serotype D (strain B-3501A) (Filobasidiella neoformans).